Reading from the N-terminus, the 308-residue chain is Cytochrome c biogenesis protein CcsA (308 aa).

The next 7 helical transmembrane spans lie at 2–22, 44–64, 71–91, 143–163, 212–232, 247–267, and 273–293; these read IVSTLEHILTHISLSIVSILI, GMLITFLCITGLLANNWIYLG, LSESLIFLSWSFALIHSIGYF, MILGYAALLCGSLLSVALMVI, VISLGFIFLTIGILSGAVWAN, WAFITWIVFAIYLHTRININL, and AIVASLGFIIIWICYFGVNLV.

It belongs to the CcmF/CycK/Ccl1/NrfE/CcsA family. In terms of assembly, may interact with Ccs1.

The protein resides in the plastid membrane. Its function is as follows. Required during biogenesis of c-type cytochromes (cytochrome c6 and cytochrome f) at the step of heme attachment. The sequence is that of Cytochrome c biogenesis protein CcsA from Cuscuta reflexa (Southern Asian dodder).